A 193-amino-acid chain; its full sequence is Potassium-transporting ATPase KdpC subunit (193 aa).

Residues 7–27 (PALVLFAALTLLTGVAYPLAV) traverse the membrane as a helical segment.

This sequence belongs to the KdpC family. The system is composed of three essential subunits: KdpA, KdpB and KdpC.

The protein resides in the cell inner membrane. Part of the high-affinity ATP-driven potassium transport (or Kdp) system, which catalyzes the hydrolysis of ATP coupled with the electrogenic transport of potassium into the cytoplasm. This subunit acts as a catalytic chaperone that increases the ATP-binding affinity of the ATP-hydrolyzing subunit KdpB by the formation of a transient KdpB/KdpC/ATP ternary complex. This is Potassium-transporting ATPase KdpC subunit from Rhodospirillum rubrum (strain ATCC 11170 / ATH 1.1.1 / DSM 467 / LMG 4362 / NCIMB 8255 / S1).